A 197-amino-acid polypeptide reads, in one-letter code: MSRVGRVERTTKETSVLVEIDLDGSGKVDVSTGVGFYDHMLDQLGRHGLFDLTVKTEGDLHIDSHHTIEDTALALGAAFKQALGDKVGIYRFGNCTVPLDESLAQVTVDLSGRPYLVHTEPENMAPMIGEYDTTMTRHILESFVAQAQIALHVHVPYGRNAHHIVECQFKALARALRYASERDPRAAGILPSTKGAL.

Belongs to the imidazoleglycerol-phosphate dehydratase family.

Its subcellular location is the cytoplasm. It catalyses the reaction D-erythro-1-(imidazol-4-yl)glycerol 3-phosphate = 3-(imidazol-4-yl)-2-oxopropyl phosphate + H2O. The protein operates within amino-acid biosynthesis; L-histidine biosynthesis; L-histidine from 5-phospho-alpha-D-ribose 1-diphosphate: step 6/9. This Streptomyces avermitilis (strain ATCC 31267 / DSM 46492 / JCM 5070 / NBRC 14893 / NCIMB 12804 / NRRL 8165 / MA-4680) protein is Imidazoleglycerol-phosphate dehydratase.